The sequence spans 229 residues: Octanoyltransferase (229 aa).

Positions 30–223 (PDTPDTIWLV…QLQQRAQAHP (194 aa)) constitute a BPL/LPL catalytic domain. Substrate is bound by residues 69 to 76 (RGGQITYH), 141 to 143 (ALG), and 154 to 156 (GVS). C172 functions as the Acyl-thioester intermediate in the catalytic mechanism.

The protein belongs to the LipB family.

Its subcellular location is the cytoplasm. It catalyses the reaction octanoyl-[ACP] + L-lysyl-[protein] = N(6)-octanoyl-L-lysyl-[protein] + holo-[ACP] + H(+). It participates in protein modification; protein lipoylation via endogenous pathway; protein N(6)-(lipoyl)lysine from octanoyl-[acyl-carrier-protein]: step 1/2. Its function is as follows. Catalyzes the transfer of endogenously produced octanoic acid from octanoyl-acyl-carrier-protein onto the lipoyl domains of lipoate-dependent enzymes. Lipoyl-ACP can also act as a substrate although octanoyl-ACP is likely to be the physiological substrate. This Ralstonia pickettii (strain 12J) protein is Octanoyltransferase.